The primary structure comprises 260 residues: MYFAVIGTHVRGKSASPAMHNASFKTLGINAVYIALDVPREELPCFLQLARLNLRGFNVTIPHKEEVVKYLDSVAADARAIGAVNTVLVERNLLVGYNTDASALYQLASSHMKGADVLIVGAGGAARAALFAAIKAEARAVYITNRTYERAEALAREFAEKFKREVKAVRGPVKADVVINATPVYDAVVADLSGASLYVDFAYIPTPRTKMVEEAQRLGIKVIDGVDLLVEQGAQAEKIWLGVEPDRTVMKRAVLEFLGI.

Residues 14-16 (SAS) and threonine 60 each bind shikimate. The active-site Proton acceptor is the lysine 64. Shikimate is bound by residues asparagine 85 and aspartate 100. NADP(+)-binding positions include 121–125 (GAGGA), 145–150 (NRTYER), and phenylalanine 201. Tyrosine 203 serves as a coordination point for shikimate. An NADP(+)-binding site is contributed by glycine 225.

Belongs to the shikimate dehydrogenase family. As to quaternary structure, homodimer.

It carries out the reaction shikimate + NADP(+) = 3-dehydroshikimate + NADPH + H(+). The protein operates within metabolic intermediate biosynthesis; chorismate biosynthesis; chorismate from D-erythrose 4-phosphate and phosphoenolpyruvate: step 4/7. Involved in the biosynthesis of the chorismate, which leads to the biosynthesis of aromatic amino acids. Catalyzes the reversible NADPH linked reduction of 3-dehydroshikimate (DHSA) to yield shikimate (SA). The polypeptide is Shikimate dehydrogenase (NADP(+)) (Pyrobaculum islandicum (strain DSM 4184 / JCM 9189 / GEO3)).